The sequence spans 268 residues: ClpXP adapter protein SpxH (268 aa).

This sequence belongs to the SpxH family. In terms of assembly, interacts with Spx.

Its subcellular location is the cytoplasm. Its function is as follows. Adapter protein required for efficient degradation of Spx by ClpXP under non-stress conditions. Interaction with Spx stabilizes Spx and exposes the C-terminus of Spx for recognition and proteolysis by ClpXP. In Staphylococcus aureus (strain COL), this protein is ClpXP adapter protein SpxH.